Reading from the N-terminus, the 627-residue chain is uncharacterized protein (627 aa).

Residues 1–20 (MAKFKKDLTTKNKDTDRLSE) show a composition bias toward basic and acidic residues. Disordered stretches follow at residues 1 to 22 (MAKF…SEEI) and 578 to 606 (LSLG…LLPV). Residues 582–592 (SEEEQGQEETE) show a composition bias toward acidic residues.

This is an uncharacterized protein from Rickettsia prowazekii (strain Madrid E).